The primary structure comprises 2090 residues: Non-reducing polyketide synthase rdc1 (2090 aa).

Residues 12–250 (FLVGDQVDSW…NPLNIHALQH (239 aa)) are N-terminal acylcarrier protein transacylase (SAT) domain. The Ketosynthase family 3 (KS3) domain occupies 375 to 808 (TGRIAIVGMS…GGNACLLLED (434 aa)). Residues cysteine 551, histidine 686, and histidine 726 each act as for beta-ketoacyl synthase activity in the active site. The segment at 912-1195 (IFVFSGQGSH…NQVCTQFVRA (284 aa)) is malonyl-CoA:ACP transacylase (MAT) domain. The active-site For acyl/malonyl transferase activity is serine 1003. Positions 1293-1433 (QHVAKESSSN…LVVQKNVKAL (141 aa)) are N-terminal hotdog fold. The PKS/mFAS DH domain maps to 1293–1607 (QHVAKESSSN…FVRISNALLQ (315 aa)). Positions 1304-1604 (GKLEITFRAS…NLSFVRISNA (301 aa)) are product template (PT) domain. Positions 1459 to 1607 (QGHWLKHDIF…FVRISNALLQ (149 aa)) are C-terminal hotdog fold. Positions 1615–1650 (SKPVGRGMAKQEKQEVPATTEVVRQPEKEESRHSVD) are disordered. Residues 1638-1649 (RQPEKEESRHSV) are compositionally biased toward basic and acidic residues. Residues 1649–1726 (VDTPSFSDVL…DIKRAFDILT (78 aa)) enclose the Carrier domain. Serine 1686 is subject to O-(pantetheine 4'-phosphoryl)serine. The thioesterase (TE) domain stretch occupies residues 1820–1964 (ADGTGSIATY…THQHLKALFA (145 aa)).

It functions in the pathway secondary metabolite biosynthesis. Non-reducing polyketide synthase; part of the gene cluster that mediates the biosynthesis of radicicol, a resorcylic acid lactone (RAL) that irreversibly inhibits the HSP90 molecular chaperone, an important target for cancer chemotherapy. The radicicol cluster encodes only two apparent post-PKS enzymes, a cytochrome P450 monooxygenase (rdc4) and a non-heme halogenase (rdc2) that could introduce the epoxide and the chlorine, respectively. If this cluster includes all the genes required for radicicol biosynthesis, the remaining structural features of radicicol are presumably generated by the PKSs rdc1 and rdc5. The C-2' ketone could arise if the R-PKS rdc5 and NR-PKS rdc1 each carry out four iterations, in contrast to the five iteration-three iteration split for the hypothemycin PKSs. The origin of the cis 5',6' double bond is not known. The radicicol R-PKS rdc5 ER domain may catalyze either double bond isomerization or reduction in the third iteration. This chain is Non-reducing polyketide synthase rdc1, found in Metacordyceps chlamydosporia (Nematophagous fungus).